The primary structure comprises 466 residues: Ribulose bisphosphate carboxylase large chain (466 aa).

Position 5 is an N6,N6,N6-trimethyllysine (K5). N114 and T164 together coordinate substrate. K166 acts as the Proton acceptor in catalysis. K168 is a substrate binding site. Positions 192, 194, and 195 each coordinate Mg(2+). N6-carboxylysine is present on K192. Residue H285 is the Proton acceptor of the active site. Residues R286, H318, and S370 each coordinate substrate.

This sequence belongs to the RuBisCO large chain family. Type I subfamily. In terms of assembly, heterohexadecamer of 8 large chains and 8 small chains; disulfide-linked. The disulfide link is formed within the large subunit homodimers. Mg(2+) is required as a cofactor. In terms of processing, the disulfide bond which can form in the large chain dimeric partners within the hexadecamer appears to be associated with oxidative stress and protein turnover.

The protein resides in the plastid. It localises to the chloroplast. It catalyses the reaction 2 (2R)-3-phosphoglycerate + 2 H(+) = D-ribulose 1,5-bisphosphate + CO2 + H2O. The catalysed reaction is D-ribulose 1,5-bisphosphate + O2 = 2-phosphoglycolate + (2R)-3-phosphoglycerate + 2 H(+). RuBisCO catalyzes two reactions: the carboxylation of D-ribulose 1,5-bisphosphate, the primary event in carbon dioxide fixation, as well as the oxidative fragmentation of the pentose substrate in the photorespiration process. Both reactions occur simultaneously and in competition at the same active site. In Tropaeolum majus (Common nasturtium), this protein is Ribulose bisphosphate carboxylase large chain.